The sequence spans 372 residues: Adaptive-response sensory-kinase SasA (372 aa).

The Histidine kinase domain occupies 147 to 360 (MVAHELRTPL…CFHFTVPVWQ (214 aa)). The residue at position 150 (His-150) is a Phosphohistidine; by autocatalysis.

Homooligomerizes. Interacts with KaiC. Participates in the KaiBC complex, whose core is composed of a KaiC homohexamer and 6 KaiB.

It catalyses the reaction ATP + protein L-histidine = ADP + protein N-phospho-L-histidine.. Functionally, member of the two-component regulatory system SasA/RpaA involved in genome-wide circadian gene expression. One of several clock output pathways. Participates in the Kai clock protein complex, the main circadian regulator in cyanobacteria, via its interaction with KaiC. KaiC enhances the autophosphorylation activity of SasA, which then transfers its phosphate group to RpaA to activate it. In addition to its output function, recruits fold-shifted KaiB (KaiB(fs)) to KaiC to cooperatively form the KaiB(6):KaiC(6) complex (independent of SasA kinase activity). Required for robustness of the circadian rhythm of gene expression and is involved in clock output, also required for adaptation to light/dark cycles. In Prochlorococcus marinus subsp. pastoris (strain CCMP1986 / NIES-2087 / MED4), this protein is Adaptive-response sensory-kinase SasA.